A 610-amino-acid polypeptide reads, in one-letter code: UvrABC system protein C (610 aa).

A GIY-YIG domain is found at 16-94; it reads SQPGVYRMYD…IKLYQPRYNV (79 aa). The 36-residue stretch at 204-239 folds into the UVR domain; sequence QQVLHQLIERMENASKALNFEEAARIRDQIQAVRRV.

It belongs to the UvrC family. As to quaternary structure, interacts with UvrB in an incision complex.

The protein localises to the cytoplasm. Functionally, the UvrABC repair system catalyzes the recognition and processing of DNA lesions. UvrC both incises the 5' and 3' sides of the lesion. The N-terminal half is responsible for the 3' incision and the C-terminal half is responsible for the 5' incision. The chain is UvrABC system protein C from Serratia proteamaculans (strain 568).